We begin with the raw amino-acid sequence, 150 residues long: MSTLEQKLTEMITAPVEALGYELVGIEFIRGRTSTLRIYIDSEDGINVDDCADVSHQVSAVLDVEDPISVAYNLEVSSPGLDRPMFTADHYARFQGEEVALVLRMAVQNRRKWQGIIKAVDGEMITVTVEGKDEVFALSNIQKANLVPHF.

This sequence belongs to the RimP family.

The protein resides in the cytoplasm. In terms of biological role, required for maturation of 30S ribosomal subunits. The sequence is that of Ribosome maturation factor RimP from Salmonella dublin (strain CT_02021853).